A 459-amino-acid polypeptide reads, in one-letter code: F-box protein At1g47340 (459 aa).

Positions 31–76 (FMVSVSLPKELILEILKRLPAKSVKRFHCVSKQWASMLSCPHFREL) constitute an F-box domain. The segment at 434 to 459 (AKIEWEEEEEEDEDEDQEKEEEDQWS) is disordered. The span at 438-459 (WEEEEEEDEDEDQEKEEEDQWS) shows a compositional bias: acidic residues.

This chain is F-box protein At1g47340, found in Arabidopsis thaliana (Mouse-ear cress).